Consider the following 232-residue polypeptide: Enolase-phosphatase E1 (232 aa).

Belongs to the HAD-like hydrolase superfamily. MasA/MtnC family. In terms of assembly, monomer. Mg(2+) serves as cofactor.

The catalysed reaction is 5-methylsulfanyl-2,3-dioxopentyl phosphate + H2O = 1,2-dihydroxy-5-(methylsulfanyl)pent-1-en-3-one + phosphate. The protein operates within amino-acid biosynthesis; L-methionine biosynthesis via salvage pathway; L-methionine from S-methyl-5-thio-alpha-D-ribose 1-phosphate: step 3/6. It participates in amino-acid biosynthesis; L-methionine biosynthesis via salvage pathway; L-methionine from S-methyl-5-thio-alpha-D-ribose 1-phosphate: step 4/6. Functionally, bifunctional enzyme that catalyzes the enolization of 2,3-diketo-5-methylthiopentyl-1-phosphate (DK-MTP-1-P) into the intermediate 2-hydroxy-3-keto-5-methylthiopentenyl-1-phosphate (HK-MTPenyl-1-P), which is then dephosphorylated to form the acireductone 1,2-dihydroxy-3-keto-5-methylthiopentene (DHK-MTPene). In Xanthomonas axonopodis pv. citri (strain 306), this protein is Enolase-phosphatase E1.